Consider the following 847-residue polypeptide: Pep5-like zinc finger protein C16A10.03c (847 aa).

The stretch at 387–526 (YIEAIPFSDS…GIWLFNSDPM (140 aa)) is one CHCR repeat. The RING-type; atypical zinc finger occupies 780-814 (CDNCEGLLDVPFVSYSCLHLVHRDCATETVCPKCK).

Its subcellular location is the cytoplasm. It is found in the nucleus. The chain is Pep5-like zinc finger protein C16A10.03c from Schizosaccharomyces pombe (strain 972 / ATCC 24843) (Fission yeast).